Consider the following 528-residue polypeptide: Calcium-dependent protein kinase 4 (528 aa).

The interval 1–36 (MGQEVSSVNNTKNEHHKTNKKSLKGGNERHEMKESS) is disordered. A lipid anchor (N-myristoyl glycine) is attached at Gly-2. Positions 14–23 (EHHKTNKKSL) are enriched in basic residues. Residues 71-329 (KGIKILGKGS…RDALEHEWIK (259 aa)) form the Protein kinase domain. Residues 76-84 (LGKGSFGEV) and Lys-99 each bind ATP. Asp-193 acts as the Proton acceptor in catalysis. Residues 350 to 358 (NIRQFQSTQ) carry the J domain autoinhibitory motif motif. Residues 350–386 (NIRQFQSTQKLAQAALLYMGSKLTTIDETKELTKIFK) form a j domain region. Residues 359 to 368 (KLAQAALLYM) carry the J domain EF-hand interaction motif motif. EF-hand domains follow at residues 376–411 (DETKELTKIFKKMDKNGDGQLDRNELIIGYKELLKL), 427–458 (EVDQILNSIDLDQNGYIEYSEFLTVSIDRKLL), 459–494 (LSTERLEKAFKLFDKDGSGKISANELAQLFGLSDVS), and 496–528 (ECWKTVLKEVDQNNDGEIDFKEFRDMLVKLCNY). Residues Asp-389, Asn-391, Asp-393, Gln-395, Glu-400, Asp-436, Asp-438, Asn-440, Tyr-442, Glu-447, Asp-472, Asp-474, Ser-476, Lys-478, Glu-483, Asp-506, Asn-508, Asp-510, Glu-512, and Glu-517 each coordinate Ca(2+).

It belongs to the protein kinase superfamily. Ser/Thr protein kinase family. CDPK subfamily. In terms of assembly, may interact with the pre-replication MCM complex prior male gametogenesis activation. Requires Mg(2+) as cofactor. In terms of processing, myristoylated; myristoylation may target it to different subcellular compartments. During male gametogenesis, myristoylation is required to initiate DNA replication but not for mitotic spindle assembly or axoneme activation. Not palmitoylated. Post-translationally, may be autophosphorylated on Thr-234 in vitro.

Its subcellular location is the cytoplasm. The protein localises to the cell membrane. The enzyme catalyses L-seryl-[protein] + ATP = O-phospho-L-seryl-[protein] + ADP + H(+). It catalyses the reaction L-threonyl-[protein] + ATP = O-phospho-L-threonyl-[protein] + ADP + H(+). Activated by calcium. Upon calcium binding to the EF-hand domains, the C-terminus of the junction domain (J domain) undergoes a conformational change which results in the dissociation of the pseudo-substrate inhibitory motif from the catalytic domain. This, in turn, may facilitate the autophosphorylation of the activation loop at Thr-234, which leads to the kinase activation. Intracellular calcium increase is triggered by xanthurenic acid (XA), a small mosquito molecule that induces the differentiation of specialized transmission stages, the gametocytes, into male and female gametes. Activated by a decrease in temperature (20 degrees Celsius) and an increase in pH (7.6) occurring when the parasite is ingested by in the mosquito. Calcium-dependent protein kinase which acts as a sensor and effector of intracellular Ca(2+) levels probably in part downstream of cGMP-activated PKG kinase. Plays a central role in the host erythrocytes and hepatocytes infection cycles, sexual reproduction and mosquito transmission of the parasite. During the liver stage, involved in sporozoite motility and thus in sporozoite invasion of host hepatocytes, probably together with CDPK1 and CDPK5. Involved in merosome egress from host hepatocytes, probably together with CDPK5. During the asexual blood stage, involved in merozoite invasion of host erythrocytes and motility by stabilizing the inner membrane complex, a structure below the plasma membrane which acts as an anchor for the glidosome, an acto-myosin motor. Required for cell cycle progression in the male gametocyte. During male gametogenesis in the mosquito gut, required to initiate the first round of DNA replication, probably by facilitating the assembly of the pre-replicative MCM complex, to assemble the first mitotic spindle and, at the end of gametogenesis, to initiate axoneme motility, cytokinesis and subsequent exflagellation. For each of these steps, may phosphorylate SOC1, SOC2 and SOC3, respectively. Together with CDPK1, regulates ookinete gliding in the mosquito host midgut. This is Calcium-dependent protein kinase 4 from Plasmodium falciparum (isolate 3D7).